The primary structure comprises 670 residues: Tyramine beta-hydroxylase (670 aa).

The segment covering 26–35 (HHQLAYHHHK) has biased composition (basic residues). The disordered stretch occupies residues 26 to 63 (HHQLAYHHHKQEQQQQQQQQQQQQAKQKQKQNGVQQGR). Residues 38–61 (QQQQQQQQQQQQAKQKQKQNGVQQ) show a composition bias toward low complexity. The chain crosses the membrane as a helical span at residues 65–81 (PTFMPVMLLLLMATLLT). A DOMON domain is found at 104 to 220 (KEIKLSWMVD…GTMYVVWARG (117 aa)). An N-linked (GlcNAc...) asparagine glycan is attached at N235. Y281 is a catalytic residue. 2 disulfides stabilise this stretch: C283–C334 and C319–C344. Cu(2+) contacts are provided by H312 and H313. The Cu(2+) site is built by H382, H461, H463, and M536. Disulfide bonds link C439–C552, C443–C613, and C515–C537. The active site involves H461. N-linked (GlcNAc...) asparagine glycosylation is present at N614.

The protein belongs to the copper type II ascorbate-dependent monooxygenase family. As to quaternary structure, is most likely a monomer under physiological conditions, although under conditions of high pH and low ionic strength the dimeric form predominates. Both forms are equally active. Cu(2+) serves as cofactor. Present in head and in neurons innervating the oviduct (at protein level).

Its subcellular location is the membrane. The catalysed reaction is tyramine + L-ascorbate + O2 = (R)-octopamine + L-dehydroascorbate + H2O. Catalyzes the hydroxylation of tyramine into octopamine, a neurotransmitter involved in ovulation and locomotion. Functions in an amine-mediated Bacc-dependent signaling pathway that negatively regulates acute ethanol sensitivity. Involved in facilitation of nociceptive escape behavior in response to potentially damaging stimuli, such as high temperatures. The polypeptide is Tyramine beta-hydroxylase (Tbh) (Drosophila melanogaster (Fruit fly)).